A 487-amino-acid polypeptide reads, in one-letter code: Putative B3 domain-containing protein At1g78640 (487 aa).

2 DNA-binding regions (TF-B3) span residues 171-269 (RLLL…QQGT) and 379-474 (RLTL…LFRV).

Its subcellular location is the nucleus. The polypeptide is Putative B3 domain-containing protein At1g78640 (Arabidopsis thaliana (Mouse-ear cress)).